Here is a 177-residue protein sequence, read N- to C-terminus: Preprotein translocase subunit SECE1 (177 aa).

The N-terminal 38 residues, 1-38, are a transit peptide targeting the chloroplast; that stretch reads MSLTAQFSPPVTGITRSLRDTKPSLSNLRVFPVYTEIR. The tract at residues 60 to 87 is disordered; that stretch reads RDTAGSESESEATPSPAEESGSGEDKEV. Low complexity predominate over residues 64-79; the sequence is GSESESEATPSPAEES. Residues 140-160 traverse the membrane as a helical segment; it reads VVLGVIAGSSVVLLTVNFLLA.

The protein belongs to the SecE/SEC61-gamma family. In terms of assembly, part of the Sec protein translocation apparatus. Interacts with SCY1 and ALB3.

It localises to the plastid. The protein resides in the chloroplast thylakoid membrane. Its function is as follows. Involved in the import/insertion pathway in the thylakoids. The signal recognition particle is not involved in the insertion of SECE1 in the thylakoid membrane. The polypeptide is Preprotein translocase subunit SECE1 (SECE1) (Arabidopsis thaliana (Mouse-ear cress)).